The primary structure comprises 519 residues: 3-octaprenyl-4-hydroxybenzoate carboxy-lyase (519 aa).

Asn-177 serves as a coordination point for Mn(2+). Prenylated FMN contacts are provided by residues Ile-180–Arg-182, Arg-194–Leu-196, and Arg-199–Gly-200. Residue Glu-243 coordinates Mn(2+). Catalysis depends on Asp-318, which acts as the Proton donor.

Belongs to the UbiD family. As to quaternary structure, homohexamer. It depends on prenylated FMN as a cofactor. The cofactor is Mn(2+).

Its subcellular location is the cell membrane. It catalyses the reaction a 4-hydroxy-3-(all-trans-polyprenyl)benzoate + H(+) = a 2-(all-trans-polyprenyl)phenol + CO2. Its pathway is cofactor biosynthesis; ubiquinone biosynthesis. In terms of biological role, catalyzes the decarboxylation of 3-octaprenyl-4-hydroxy benzoate to 2-octaprenylphenol, an intermediate step in ubiquinone biosynthesis. The chain is 3-octaprenyl-4-hydroxybenzoate carboxy-lyase from Burkholderia mallei (strain ATCC 23344).